Consider the following 757-residue polypeptide: Ecdysone receptor (757 aa).

The modulating stretch occupies residues Met1–Leu300. Disordered regions lie at residues Asn126–Gly192 and Leu235–Lys289. The span at Val128–Pro138 shows a compositional bias: gly residues. The span at Asn167–His183 shows a compositional bias: low complexity. NR C4-type zinc fingers lie at residues Cys301–Cys321 and Cys337–Cys361. Positions Cys301–Pro373 form a DNA-binding region, nuclear receptor. Residues Asn442–Ala677 enclose the NR LBD domain. Residues Thr717–Thr734 show a composition bias toward low complexity. A disordered region spans residues Thr717–Ala739.

This sequence belongs to the nuclear hormone receptor family. NR1 subfamily.

It is found in the nucleus. Functionally, receptor for ecdysone. Binds to ecdysone response elements (ECRES). In Lucilia cuprina (Green bottle fly), this protein is Ecdysone receptor (EcR).